The primary structure comprises 209 residues: Glutathione S-transferase D1 (209 aa).

Residues 1 to 81 (MVDFYYLPGS…YLVEKYGKTD (81 aa)) enclose the GST N-terminal domain. Glutathione contacts are provided by residues Ser10, 51–53 (HTI), and 65–67 (ESR). Positions 87–208 (CPKKRAVINQ…AGCLEFKKYF (122 aa)) constitute a GST C-terminal domain.

Belongs to the GST superfamily. Delta family. In terms of assembly, homodimer.

It carries out the reaction RX + glutathione = an S-substituted glutathione + a halide anion + H(+). The catalysed reaction is 1,1,1-trichloro-2,2-bis(4-chlorophenyl)ethane = 1,1-dichloro-2,2-bis(4-chlorophenyl)ethylene + chloride + H(+). In terms of biological role, conjugation of reduced glutathione to a wide number of exogenous and endogenous hydrophobic electrophiles. Has DDT dehydrochlorinase activity. May be involved in detoxification. This Drosophila melanogaster (Fruit fly) protein is Glutathione S-transferase D1.